The primary structure comprises 433 residues: Enolase (433 aa).

Q167 is a (2R)-2-phosphoglycerate binding site. The Proton donor role is filled by E209. The Mg(2+) site is built by D246, E291, and D318. Positions 343, 372, 373, and 394 each coordinate (2R)-2-phosphoglycerate. K343 serves as the catalytic Proton acceptor.

This sequence belongs to the enolase family. In terms of assembly, component of the RNA degradosome, a multiprotein complex involved in RNA processing and mRNA degradation. It depends on Mg(2+) as a cofactor.

The protein localises to the cytoplasm. It localises to the secreted. The protein resides in the cell surface. The catalysed reaction is (2R)-2-phosphoglycerate = phosphoenolpyruvate + H2O. Its pathway is carbohydrate degradation; glycolysis; pyruvate from D-glyceraldehyde 3-phosphate: step 4/5. Catalyzes the reversible conversion of 2-phosphoglycerate (2-PG) into phosphoenolpyruvate (PEP). It is essential for the degradation of carbohydrates via glycolysis. This chain is Enolase, found in Pasteurella multocida (strain Pm70).